Here is a 179-residue protein sequence, read N- to C-terminus: Replication restart protein DnaT (179 aa).

The span at 151 to 168 (SRSSNGGMPQRDINSVSE) shows a compositional bias: polar residues. Positions 151 to 179 (SRSSNGGMPQRDINSVSEPDNHIPPGFRG) are disordered.

This sequence belongs to the DnaT family. In terms of assembly, homooligomerizes. Interacts with PriB. Component of the replication restart primosome. Primosome assembly occurs via a 'hand-off' mechanism. PriA binds to replication forks, subsequently PriB then DnaT bind; DnaT then displaces ssDNA to generate the helicase loading substrate.

Functionally, involved in the restart of stalled replication forks, which reloads the replicative helicase on sites other than the origin of replication. Can function in multiple replication restart pathways. Displaces ssDNA from a PriB-ssDNA complex. Probably forms a spiral filament on ssDNA. The sequence is that of Replication restart protein DnaT from Salmonella schwarzengrund (strain CVM19633).